The sequence spans 317 residues: Small ribosomal subunit protein uS2 (317 aa).

Ser2 carries the post-translational modification N-acetylserine. Laminin-binding stretches follow at residues 161–180 and 205–229; these read IPCN…MLSR and RDPE…EFQG. [DE]-W-[ST] repeat units follow at residues 230 to 232 and 245 to 247; these read EWT and DWS. A laminin-binding region spans residues 242–317; the sequence is EVADWSEGVA…EWGGASADWS (76 aa). Residues 271–284 are compositionally biased toward low complexity; that stretch reads EAAAPSKAPAAAEG. The segment at 271–317 is disordered; it reads EAAAPSKAPAAAEGFAEDWSAQPATEDWSAAPTAQATEWGGASADWS. 3 [DE]-W-[ST] repeats span residues 288–290, 297–299, and 315–317; these read DWS.

Belongs to the universal ribosomal protein uS2 family. Monomer (37LRP) and homodimer (67LR). Component of the small ribosomal subunit. Mature ribosomes consist of a small (40S) and a large (60S) subunit. The 40S subunit contains about 33 different proteins and 1 molecule of RNA (18S). The 60S subunit contains about 49 different proteins and 3 molecules of RNA (28S, 5.8S and 5S). Interacts with rps21. Interacts with several laminins including at least lamb1. Interacts with mdk. Post-translationally, acylated. Acylation may be a prerequisite for conversion of the monomeric 37 kDa laminin receptor precursor (37LRP) to the mature dimeric 67 kDa laminin receptor (67LR), and may provide a mechanism for membrane association. Cleaved by stromelysin-3 (ST3) at the cell surface. Cleavage by stromelysin-3 may be a mechanism to alter cell-extracellular matrix interactions.

The protein localises to the cell membrane. Its subcellular location is the cytoplasm. The protein resides in the nucleus. In terms of biological role, required for the assembly and/or stability of the 40S ribosomal subunit. Required for the processing of the 20S rRNA-precursor to mature 18S rRNA in a late step of the maturation of 40S ribosomal subunits. Also functions as a cell surface receptor for laminin. Plays a role in cell adhesion to the basement membrane and in the consequent activation of signaling transduction pathways. May play a role in cell fate determination and tissue morphogenesis. The protein is Small ribosomal subunit protein uS2 (rpsa) of Salmo salar (Atlantic salmon).